Here is a 388-residue protein sequence, read N- to C-terminus: MHKKIYLSPPHMSGREQHYISEAFRSNWIAPLGPLVNSFEEQLAERVGVKAAAAVGSGTAAIHLALRLLEVKEGDSVFCQSFTFVATANPILYEKAVPVFIDSEPDTWNMSPTALERALEEAKRNGTLPKAVIAVNLYGQSAKMDEIVSLCDAYGVPVIEDAAESLGTVYKGKQSGTFGRFGIFSFNGNKIITTSGGGMLVSNDEAAIEKARFLASQAREPAVHYQHSEIGHNYRLSNILAGVGIAQLEVLDERVEKRRTIFTRYKNALGHLDGVRFMPEYAAGVSNRWLTTLTLDNGLSPYDIVQRLAEENIEARPLWKPLHTQPLFDPALFYSHEDTGSVCEDLFKRGICLPSGSNMTEDEQGRVIEVLLHLFHTVEVKKWTASIR.

K190 bears the N6-(pyridoxal phosphate)lysine mark.

Belongs to the DegT/DnrJ/EryC1 family. Requires pyridoxal 5'-phosphate as cofactor.

Functionally, may be involved in the production of the exopolysaccharide (EPS) component of the extracellular matrix during biofilm formation. EPS is responsible for the adhesion of chains of cells into bundles. This chain is Putative pyridoxal phosphate-dependent aminotransferase EpsN (epsN), found in Bacillus subtilis (strain 168).